A 142-amino-acid chain; its full sequence is Putative pre-16S rRNA nuclease (142 aa).

This sequence belongs to the YqgF nuclease family.

It localises to the cytoplasm. Its function is as follows. Could be a nuclease involved in processing of the 5'-end of pre-16S rRNA. The chain is Putative pre-16S rRNA nuclease from Chloroflexus aggregans (strain MD-66 / DSM 9485).